The primary structure comprises 266 residues: Thymidylate synthase (266 aa).

Arg-24 is a binding site for dUMP. His-54 contacts (6R)-5,10-methylene-5,6,7,8-tetrahydrofolate. 129 to 130 (RR) serves as a coordination point for dUMP. The active-site Nucleophile is Cys-149. Residues 169–172 (RSAD), Asn-180, and 210–212 (HIY) contribute to the dUMP site. A (6R)-5,10-methylene-5,6,7,8-tetrahydrofolate-binding site is contributed by Asp-172. Ala-265 provides a ligand contact to (6R)-5,10-methylene-5,6,7,8-tetrahydrofolate.

It belongs to the thymidylate synthase family. Bacterial-type ThyA subfamily. As to quaternary structure, homodimer.

It localises to the cytoplasm. It carries out the reaction dUMP + (6R)-5,10-methylene-5,6,7,8-tetrahydrofolate = 7,8-dihydrofolate + dTMP. It functions in the pathway pyrimidine metabolism; dTTP biosynthesis. Its function is as follows. Catalyzes the reductive methylation of 2'-deoxyuridine-5'-monophosphate (dUMP) to 2'-deoxythymidine-5'-monophosphate (dTMP) while utilizing 5,10-methylenetetrahydrofolate (mTHF) as the methyl donor and reductant in the reaction, yielding dihydrofolate (DHF) as a by-product. This enzymatic reaction provides an intracellular de novo source of dTMP, an essential precursor for DNA biosynthesis. This is Thymidylate synthase from Nocardia farcinica (strain IFM 10152).